A 72-amino-acid chain; its full sequence is Translation initiation factor IF-1 (72 aa).

One can recognise an S1-like domain in the interval 1–72; sequence MAKEEAIEVE…TRGRIIFRER (72 aa).

This sequence belongs to the IF-1 family. In terms of assembly, component of the 30S ribosomal translation pre-initiation complex which assembles on the 30S ribosome in the order IF-2 and IF-3, IF-1 and N-formylmethionyl-tRNA(fMet); mRNA recruitment can occur at any time during PIC assembly.

It localises to the cytoplasm. Functionally, one of the essential components for the initiation of protein synthesis. Stabilizes the binding of IF-2 and IF-3 on the 30S subunit to which N-formylmethionyl-tRNA(fMet) subsequently binds. Helps modulate mRNA selection, yielding the 30S pre-initiation complex (PIC). Upon addition of the 50S ribosomal subunit IF-1, IF-2 and IF-3 are released leaving the mature 70S translation initiation complex. The protein is Translation initiation factor IF-1 of Treponema denticola (strain ATCC 35405 / DSM 14222 / CIP 103919 / JCM 8153 / KCTC 15104).